Consider the following 276-residue polypeptide: Eukaryotic translation initiation factor 3 subunit G (276 aa).

Phosphoserine is present on S148. Positions 195–274 constitute an RRM domain; sequence TTLKISQLNS…LILHLEWSKK (80 aa).

The protein belongs to the eIF-3 subunit G family. In terms of assembly, component of the eukaryotic translation initiation factor 3 (eIF-3) complex.

It is found in the cytoplasm. RNA-binding component of the eukaryotic translation initiation factor 3 (eIF-3) complex, which is involved in protein synthesis of a specialized repertoire of mRNAs and, together with other initiation factors, stimulates binding of mRNA and methionyl-tRNAi to the 40S ribosome. The eIF-3 complex specifically targets and initiates translation of a subset of mRNAs involved in cell proliferation. This subunit can bind 18S rRNA. In Debaryomyces hansenii (strain ATCC 36239 / CBS 767 / BCRC 21394 / JCM 1990 / NBRC 0083 / IGC 2968) (Yeast), this protein is Eukaryotic translation initiation factor 3 subunit G.